Consider the following 326-residue polypeptide: Transcription factor bHLH143 (326 aa).

Residues 175–189 show a composition bias toward acidic residues; the sequence is SDDDDNDDWESDDEV. Disordered stretches follow at residues 175 to 194 and 234 to 275; these read SDDD…STGH and RDSS…EQSR. The segment covering 255–271 has biased composition (polar residues); sequence PESNISSKQETGSGLSD. Residues 263–312 form the bHLH domain; it reads QETGSGLSDEQSRKDKIHTALRILESVVPGAKGKEALLLLDEAIDYLKLL.

In terms of assembly, homodimer.

It localises to the nucleus. In Arabidopsis thaliana (Mouse-ear cress), this protein is Transcription factor bHLH143 (BHLH143).